The sequence spans 152 residues: ARL14 effector protein-like (152 aa).

Polar residues predominate over residues 1 to 16 (MTEPSQKNNSTQQELT). The interval 1–27 (MTEPSQKNNSTQQELTNHLFPEKSSQI) is disordered.

The chain is ARL14 effector protein-like (Arl14epl) from Mus musculus (Mouse).